A 430-amino-acid polypeptide reads, in one-letter code: MALAMMIRNAASKRGMTPISGHFGGLRSMSSWWKSVEPAPKDPILGVTEAFLADPSPEKVNVGVGAYRDDNGKPVVLECVREAEKRLAGSTFMEYLPMGGSAKMVDLTLKLAYGDNSEFIKDKRIAAVQTLSGTGACRLFADFQKRFSPGSQIYIPVPTWSNHHNIWKDAQVPQKTYHYYHPETKGLDFSALMDDVKNAPEGSFFLLHACAHNPTGVDPTEEQWREISQLFKAKKHFAFFDMAYQGFASGDPARDAKSIRIFLEDGHHIGISQSYAKNMGLYGQRVGCLSVLCEDPKQAVAVKSQLQQLARPMYSNPPLHGAQLVSTILEDPELKSLWLKEVKVMADRIIGMRTTLRESLEKLGSPLSWEHVTKQIGMFCYSGLTPEQVDRLTSEYHIYMTRNGRISMAGVTTGNVGYLANAIHEVTKSS.

Residues 1–28 (MALAMMIRNAASKRGMTPISGHFGGLRS) constitute a mitochondrion transit peptide. Positions 65, 160, and 213 each coordinate L-aspartate. N6-(pyridoxal phosphate)lysine is present on K277. An L-aspartate-binding site is contributed by R405.

The protein belongs to the class-I pyridoxal-phosphate-dependent aminotransferase family. Homodimer. It depends on pyridoxal 5'-phosphate as a cofactor.

The protein resides in the mitochondrion matrix. The enzyme catalyses L-aspartate + 2-oxoglutarate = oxaloacetate + L-glutamate. Its function is as follows. Amino acid aminotransferase important for the metabolism of amino acids and Krebs-cycle related organic acids. No activity with D-Asp or D-Ala as amino donors. In plants, it is involved in nitrogen metabolism and in aspects of carbon and energy metabolism. This is Aspartate aminotransferase, mitochondrial (ASP1) from Arabidopsis thaliana (Mouse-ear cress).